We begin with the raw amino-acid sequence, 922 residues long: MASSGHSDLGEVTSEIKASERRTAVAIADLEWREMEGDDCEFHYGEGPNEAQDNDFPIEERSRLQEMLFLLGLETYQTQKLSLQDALQISSDSMKNWAPQTPKDLPWNFLRKLQALNAEARNTTMVLDLPLDTRPVEKESQMEEEIIYWDTAEDISADIYSFSELPTPDTPVNPLDLLCALLLSSDSFLQQEIVSKMSLCQFALPLILPDPENHYHTFLLWAMRGTVRTWGSQPPRVMGSFREDSMVLSRAPAFAFVRMEVSSNSKSQLLNDVLSPGHRQQDCFWHRDLNLGTNPREIADGLVEISWFLPSGREDLDIFPEPMAFLNLRGDIGSHWLQFKLLTEISSAIFILTDNISKKEYKLLSSMKGSATKYYFILSPYRGKRNTNLRFLNRLIPVLKMDHSHVLVKVSSTDSVGFVRRVRAIITHVTRSPCRRVSVEDMANAARKLGLKVDEDCEECQRAKDRMEQITRKIKDLDAYRRDELRLQGETWRKVAQVEKELCQIQWASDPPEKYRAELRHRLLELRMQQNDHDPSWGVQEFISGISSPSLGEKQYFLKWMEWGLARVAQPRPRPSPEMIFTLRPKHCGAVDFSEPFWPEPLGVEHFLREMGQFYEAESCLVEAGKLPAGQRRFAHFPGLALELLLKGLPLELIDGNTLSPALRWVTGLLKELHVRLERRSRLVVLSALGVPGTGKSTLLNTMFGLRFVTGRGRGPRGAFMQLIKVAESFSQDLGCDHILVIDSGGLIAGVRTEAGERFEREASLATLIMGLSNVTVVSLAETRNIPPAILHAFLRLEKTGHMPNYQFVHQNLHDVSALGSKPRDRRQLLDQPSDVGRATVQMEKQGDGIQTLADLAFWDPEKQHIWHIPGLWHGVPPMAAVNLAYSEAIFELKRCLLENIRNGLSNQNKNIQQLIELVRRL.

Positions 1–20 (MASSGHSDLGEVTSEIKASE) are disordered. Residue Ser-3 is modified to Phosphoserine. One can recognise a VLIG-type G domain in the interval 680-920 (RSRLVVLSAL…NIQQLIELVR (241 aa)).

This sequence belongs to the TRAFAC class dynamin-like GTPase superfamily. Very large inducible GTPase (VLIG) family.

It is found in the cytoplasm. It localises to the nucleus. May be involved in cell cycle progression through the regulation of cyclin D1 expression. This Bos taurus (Bovine) protein is Up-regulator of cell proliferation (URGCP).